The following is a 510-amino-acid chain: Serine/threonine-protein kinase RIO3 (510 aa).

Disordered stretches follow at residues 100 to 126 and 143 to 191; these read GSSSSVHFTPDRYHPKTMQETDSENED and DEEN…DMVG. Composition is skewed to basic and acidic residues over residues 108–118 and 162–179; these read TPDRYHPKTMQ and TKHDTGVSGRRNADKTFN. The Protein kinase domain occupies 235-510; that stretch reads LLLLKWINQG…RGISPAREYN (276 aa). ATP is bound by residues 241–249 and Lys275; that span reads INQGVFDSV. Asp388 acts as the Proton acceptor in catalysis. The segment covering 474 to 499 has biased composition (basic and acidic residues); it reads RSVDLRHDKSRPADMELKKYNEEKKA. The tract at residues 474 to 510 is disordered; sequence RSVDLRHDKSRPADMELKKYNEEKKANRGISPAREYN.

The protein belongs to the protein kinase superfamily. RIO-type Ser/Thr kinase family. The cofactor is Mg(2+). As to expression, expressed in tail neurons (PVQ and PHAL/PQR).

It carries out the reaction L-seryl-[protein] + ATP = O-phospho-L-seryl-[protein] + ADP + H(+). It catalyses the reaction L-threonyl-[protein] + ATP = O-phospho-L-threonyl-[protein] + ADP + H(+). The polypeptide is Serine/threonine-protein kinase RIO3 (riok-3) (Caenorhabditis elegans).